A 308-amino-acid chain; its full sequence is ATP synthase gamma chain (308 aa).

This sequence belongs to the ATPase gamma chain family. F-type ATPases have 2 components, CF(1) - the catalytic core - and CF(0) - the membrane proton channel. CF(1) has five subunits: alpha(3), beta(3), gamma(1), delta(1), epsilon(1). CF(0) has three main subunits: a, b and c.

The protein localises to the cell membrane. Produces ATP from ADP in the presence of a proton gradient across the membrane. The gamma chain is believed to be important in regulating ATPase activity and the flow of protons through the CF(0) complex. The protein is ATP synthase gamma chain of Lacticaseibacillus casei (strain BL23) (Lactobacillus casei).